We begin with the raw amino-acid sequence, 222 residues long: Eukaryotic translation initiation factor 3 subunit K (222 aa).

One can recognise a PCI domain in the interval 46–208 (YDLEANLAVL…KIKTKNITEK (163 aa)).

It belongs to the eIF-3 subunit K family. Component of the eukaryotic translation initiation factor 3 (eIF-3) complex. The eIF-3 complex interacts with pix.

The protein localises to the cytoplasm. In terms of biological role, component of the eukaryotic translation initiation factor 3 (eIF-3) complex, which is involved in protein synthesis of a specialized repertoire of mRNAs and, together with other initiation factors, stimulates binding of mRNA and methionyl-tRNAi to the 40S ribosome. The eIF-3 complex specifically targets and initiates translation of a subset of mRNAs involved in cell proliferation. The polypeptide is Eukaryotic translation initiation factor 3 subunit K (Drosophila mojavensis (Fruit fly)).